The following is a 309-amino-acid chain: Malate dehydrogenase (309 aa).

NAD(+) contacts are provided by residues 9–14 (GAGFVG) and D33. Residues R82 and R88 each coordinate substrate. Residues N95 and 118 to 120 (VNN) each bind NAD(+). The substrate site is built by N120 and R151. H175 (proton acceptor) is an active-site residue.

It belongs to the LDH/MDH superfamily. MDH type 3 family. Homotetramer (active enzyme); homodimer and homotrimer at temperatures lower than 55 degrees Celsius (inactive forms).

The catalysed reaction is (S)-malate + NAD(+) = oxaloacetate + NADH + H(+). In terms of biological role, catalyzes the reversible oxidation of malate to oxaloacetate. The sequence is that of Malate dehydrogenase from Chloroflexus aurantiacus (strain ATCC 29366 / DSM 635 / J-10-fl).